A 947-amino-acid polypeptide reads, in one-letter code: Translation initiation factor IF-2 (947 aa).

Residues 47 to 332 are disordered; the sequence is LRESFGGGKS…RGRKSKRAKR (286 aa). The segment covering 86–95 has biased composition (basic and acidic residues); it reads APDRSLDAAL. The segment covering 105–123 has biased composition (pro residues); the sequence is APVPAPAPAPTPAPAPAPA. Residues 131–145 are compositionally biased toward low complexity; that stretch reads APPAATPAAPAASAA. Pro residues-rich tracts occupy residues 146-171 and 210-225; these read PAPPKAPLPGQRPAPTPGKPAAPQAP and PRPQAPRPGAPRPGAP. Residues 255–318 show a composition bias toward gly residues; that stretch reads RPGGGRPGGP…GAAGAFGRPG (64 aa). The span at 322-331 shows a compositional bias: basic residues; the sequence is RRGRKSKRAK. Positions 443-614 constitute a tr-type G domain; that stretch reads TRPPVVTVMG…AVLLTADAAL (172 aa). Residues 452–459 form a G1 region; it reads GHVDHGKT. 452–459 is a binding site for GTP; sequence GHVDHGKT. Residues 477–481 are G2; sequence GITQH. A G3 region spans residues 502–505; it reads DTPG. GTP contacts are provided by residues 502-506 and 556-559; these read DTPGH and NKID. The segment at 556-559 is G4; the sequence is NKID. The G5 stretch occupies residues 592 to 594; that stretch reads SAK.

Belongs to the TRAFAC class translation factor GTPase superfamily. Classic translation factor GTPase family. IF-2 subfamily.

It is found in the cytoplasm. Functionally, one of the essential components for the initiation of protein synthesis. Protects formylmethionyl-tRNA from spontaneous hydrolysis and promotes its binding to the 30S ribosomal subunits. Also involved in the hydrolysis of GTP during the formation of the 70S ribosomal complex. The sequence is that of Translation initiation factor IF-2 from Mycobacterium marinum (strain ATCC BAA-535 / M).